Here is a 331-residue protein sequence, read N- to C-terminus: 6-phosphogluconolactonase (331 aa).

Lys-287 is subject to N6-acetyllysine.

Belongs to the cycloisomerase 2 family.

It carries out the reaction 6-phospho-D-glucono-1,5-lactone + H2O = 6-phospho-D-gluconate + H(+). Its pathway is carbohydrate degradation; pentose phosphate pathway; D-ribulose 5-phosphate from D-glucose 6-phosphate (oxidative stage): step 2/3. Catalyzes the hydrolysis of 6-phosphogluconolactone to 6-phosphogluconate. The sequence is that of 6-phosphogluconolactonase from Shigella sonnei (strain Ss046).